We begin with the raw amino-acid sequence, 119 residues long: UPF0738 protein BAA_1286 (119 aa).

This sequence belongs to the UPF0738 family.

This Bacillus anthracis (strain A0248) protein is UPF0738 protein BAA_1286.